A 476-amino-acid polypeptide reads, in one-letter code: tRNA(Ile)-lysidine synthase (476 aa).

30–35 (SGGPDS) serves as a coordination point for ATP.

This sequence belongs to the tRNA(Ile)-lysidine synthase family.

The protein resides in the cytoplasm. It carries out the reaction cytidine(34) in tRNA(Ile2) + L-lysine + ATP = lysidine(34) in tRNA(Ile2) + AMP + diphosphate + H(+). Ligates lysine onto the cytidine present at position 34 of the AUA codon-specific tRNA(Ile) that contains the anticodon CAU, in an ATP-dependent manner. Cytidine is converted to lysidine, thus changing the amino acid specificity of the tRNA from methionine to isoleucine. This is tRNA(Ile)-lysidine synthase from Bacillus cereus (strain ATCC 14579 / DSM 31 / CCUG 7414 / JCM 2152 / NBRC 15305 / NCIMB 9373 / NCTC 2599 / NRRL B-3711).